The primary structure comprises 263 residues: Acetylglutamate kinase (263 aa).

Substrate contacts are provided by residues 48–49, Arg-70, and Asn-162; that span reads GG.

The protein belongs to the acetylglutamate kinase family. ArgB subfamily.

It localises to the cytoplasm. It carries out the reaction N-acetyl-L-glutamate + ATP = N-acetyl-L-glutamyl 5-phosphate + ADP. Its pathway is amino-acid biosynthesis; L-arginine biosynthesis; N(2)-acetyl-L-ornithine from L-glutamate: step 2/4. In terms of biological role, catalyzes the ATP-dependent phosphorylation of N-acetyl-L-glutamate. The sequence is that of Acetylglutamate kinase from Vibrio vulnificus (strain YJ016).